Consider the following 151-residue polypeptide: Globin CTT-X (151 aa).

In terms of domain architecture, Globin spans 6 to 150; sequence TLDAHEVEQV…AFSVIFEVLE (145 aa). The heme b site is built by histidine 64 and histidine 99.

It belongs to the globin family. As to quaternary structure, homodimer.

This is Globin CTT-X (CTT-10) from Chironomus thummi thummi (Midge).